The following is a 142-amino-acid chain: Malate dehydrogenase, mitochondrial (142 aa).

NAD(+) contacts are provided by residues 1–6 (ASGGIG) and Asp-26. Substrate is bound by residues Arg-73 and Arg-79. NAD(+) contacts are provided by residues Asn-86 and 109–111 (ITN). Asn-111 provides a ligand contact to substrate.

It belongs to the LDH/MDH superfamily. MDH type 1 family. In terms of assembly, homodimer.

Its subcellular location is the mitochondrion matrix. It catalyses the reaction (S)-malate + NAD(+) = oxaloacetate + NADH + H(+). The sequence is that of Malate dehydrogenase, mitochondrial from Schistosoma mansoni (Blood fluke).